Consider the following 893-residue polypeptide: Valine--tRNA ligase (893 aa).

The short motif at 57–67 is the 'HIGH' region element; it reads PNVTGTLHMGH. A 'KMSKS' region motif is present at residues 545–549; it reads KMSKS. Lys-548 lines the ATP pocket. A coiled-coil region spans residues 821–855; sequence TSGSVDLEAERKRLEKDLAAAQKELATTEGKLGNE.

Belongs to the class-I aminoacyl-tRNA synthetase family. ValS type 1 subfamily. Monomer.

Its subcellular location is the cytoplasm. It carries out the reaction tRNA(Val) + L-valine + ATP = L-valyl-tRNA(Val) + AMP + diphosphate. In terms of biological role, catalyzes the attachment of valine to tRNA(Val). As ValRS can inadvertently accommodate and process structurally similar amino acids such as threonine, to avoid such errors, it has a 'posttransfer' editing activity that hydrolyzes mischarged Thr-tRNA(Val) in a tRNA-dependent manner. In Nocardia farcinica (strain IFM 10152), this protein is Valine--tRNA ligase.